The sequence spans 565 residues: MKIPSQQVLLALPLLASPAQSYPGKHPRCSAGDACWPKEHVWQDFNSTISGRLIRTFPAAAVCHTAQYDAAACSVAKERWTDSFWRTNQTGAYSAILWELGEKGQCFINTPKEDRCDQGIVPYYSVSASGVKDIEKAVKFADKHDLYLVVKNTGHDHLGRSSGSGAFSIWTHNLKGKEWHKSFKPKGAPSNVSGIPAVTLQAGEQLLDVYKAAAAEGVTFAGGSAQTVGAAGGFMTGGGVSPFSHFYGLAVDNVLEVNLVTAQGKAKTINQYTDPDYFYALRGGGGSAWGVITSVTYKTHPKPTHIRVGIAQLNITTEDSRRVVIEKTLQALPDITEAGWVGYGVYATEKSNPTAFQVIFLQPNATMENFNKTFEPMNEIATLPGVTGGAVSYVFPDFLEYSKNFLRDPNIATNVIDASRLVSRQVLTERARDLVDLMFEYPTTGPGFNSIVKVNSDERDNTAVHSSFKNSRALISFSVDWADNASEKEKKAAKKTSAEVSKRLAEIVGKETGTYLNEASPYEPDWQNAFWGDKYARLLSIKRRIDPKNLFVCNRCVGTDIILEP.

Residues 1–21 (MKIPSQQVLLALPLLASPAQS) form the signal peptide. Residues Asn-46 and Asn-88 are each glycosylated (N-linked (GlcNAc...) asparagine). An FAD-binding PCMH-type domain is found at 118-302 (QGIVPYYSVS…TSVTYKTHPK (185 aa)). His-155 is subject to Pros-8alpha-FAD histidine. N-linked (GlcNAc...) asparagine glycans are attached at residues Asn-191, Asn-314, Asn-364, Asn-371, and Asn-484.

It belongs to the oxygen-dependent FAD-linked oxidoreductase family. It depends on FAD as a cofactor.

The protein localises to the secreted. This is an uncharacterized protein from Arthroderma benhamiae (strain ATCC MYA-4681 / CBS 112371) (Trichophyton mentagrophytes).